A 642-amino-acid chain; its full sequence is Transcription factor 4 (642 aa).

The segment covering 1-25 (MFSPPVSSGKNGPTSLASGHFTGSN) has biased composition (polar residues). The essential for MYOD1 inhibition stretch occupies residues 1-59 (MFSPPVSSGKNGPTSLASGHFTGSNVEDRSSSGSWGNGGHPSPSRNYGDGTPYDHMTSR). Disordered stretches follow at residues 1 to 296 (MFSP…SQTG), 311 to 354 (HTNN…EGPL), 444 to 545 (PNQV…MANN), and 609 to 642 (KRRE…MGQM). Serine 42, serine 63, and serine 68 each carry phosphoserine. 5 stretches are compositionally biased toward polar residues: residues 83–98 (GSYS…QGCH), 112–130 (GTLS…SSNN), 181–191 (PAASTFPSSFF), 218–230 (GSSS…SSYC), and 241–281 (PSHS…TDSI). The segment covering 312 to 323 (TNNSFSSNPSTP) has biased composition (low complexity). Polar residues predominate over residues 340–349 (NGGQASSSPN). Serine 347 is modified (phosphoserine). Positions 354 to 375 (LHSLQSRIEDRLERLDDAIHVL) are leucine-zipper. 2 stretches are compositionally biased toward low complexity: residues 444–455 (PNQVPVPQLPVQ) and 478–487 (GQSVSSGSSE). Residue serine 490 is modified to Phosphoserine. Composition is skewed to basic and acidic residues over residues 502 to 517 (KSSE…KDIK) and 530 to 545 (PEQK…MANN). The bHLH domain occupies 539–592 (ERRMANNARERLRVRDINEAFKELGRMVQLHLKSDKPQTKLLILHQAVAVILSL). Residues 594-617 (QQVRERNLNPKAACLKRREEEKVS) form a class A specific domain region.

As to quaternary structure, efficient DNA binding requires dimerization with another bHLH protein. Forms homo- or heterooligomers with myogenin. Interacts with HIVEP2. Interacts with NEUROD2. Interacts with AGBL1. As to expression, widely expressed.

It is found in the nucleus. Transcription factor that binds to the immunoglobulin enhancer Mu-E5/KE5-motif. Involved in the initiation of neuronal differentiation. Activates transcription by binding to the E box (5'-CANNTG-3'). Binds to the thyroglobulin promoter. The chain is Transcription factor 4 (TCF4) from Canis lupus familiaris (Dog).